We begin with the raw amino-acid sequence, 271 residues long: 1,4-dihydroxy-2-naphthoyl-CoA synthase (271 aa).

Residues 71–75, Y83, 115–119, T141, S147, Y244, and K259 each bind substrate; these read SGGDQ and YAIGG. 140-142 lines the hydrogencarbonate pocket; sequence QTG. Residues 250–263 show a composition bias toward basic and acidic residues; it reads KEGRDSFKEKRKPD. The segment at 250-271 is disordered; that stretch reads KEGRDSFKEKRKPDFGQFPRFP.

This sequence belongs to the enoyl-CoA hydratase/isomerase family. MenB subfamily. Hydrogencarbonate is required as a cofactor.

It carries out the reaction 2-succinylbenzoyl-CoA + H(+) = 1,4-dihydroxy-2-naphthoyl-CoA + H2O. Its pathway is quinol/quinone metabolism; 1,4-dihydroxy-2-naphthoate biosynthesis; 1,4-dihydroxy-2-naphthoate from chorismate: step 6/7. It functions in the pathway quinol/quinone metabolism; menaquinone biosynthesis. Its function is as follows. Converts o-succinylbenzoyl-CoA (OSB-CoA) to 1,4-dihydroxy-2-naphthoyl-CoA (DHNA-CoA). In Bacillus subtilis (strain 168), this protein is 1,4-dihydroxy-2-naphthoyl-CoA synthase.